Reading from the N-terminus, the 143-residue chain is 3-dehydroquinate dehydratase (143 aa).

Tyr22 functions as the Proton acceptor in the catalytic mechanism. Residues Asn73, His79, and Asp86 each contribute to the substrate site. The Proton donor role is filled by His99. Residues 100 to 101 (IS) and Arg110 contribute to the substrate site.

Belongs to the type-II 3-dehydroquinase family. Homododecamer.

The catalysed reaction is 3-dehydroquinate = 3-dehydroshikimate + H2O. Its pathway is metabolic intermediate biosynthesis; chorismate biosynthesis; chorismate from D-erythrose 4-phosphate and phosphoenolpyruvate: step 3/7. Catalyzes a trans-dehydration via an enolate intermediate. This is 3-dehydroquinate dehydratase from Mycobacterium avium (strain 104).